We begin with the raw amino-acid sequence, 150 residues long: Globin-1 (150 aa).

The Globin domain maps to 11–150 (PLSDAEKNKI…MICILLSSAY (140 aa)). Positions 74 and 106 each coordinate heme b.

Belongs to the globin family. Monomer.

This is Globin-1 from Mordacia mordax (Southern hemisphere lamprey).